Reading from the N-terminus, the 229-residue chain is Cytochrome c oxidase subunit 2 (229 aa).

Topologically, residues M1 to Y26 are mitochondrial intermembrane. The helical transmembrane segment at A27–S48 threads the bilayer. Over S49 to E62 the chain is Mitochondrial matrix. The chain crosses the membrane as a helical span at residues T63–Q82. Residues L83–E229 lie on the Mitochondrial intermembrane side of the membrane. Cu cation is bound by residues H161, C196, E198, C200, H204, and M207. E198 is a binding site for Mg(2+).

It belongs to the cytochrome c oxidase subunit 2 family. As to quaternary structure, component of the cytochrome c oxidase (complex IV, CIV), a multisubunit enzyme composed of a catalytic core of 3 subunits and several supernumerary subunits. The complex exists as a monomer or a dimer and forms supercomplexes (SCs) in the inner mitochondrial membrane with ubiquinol-cytochrome c oxidoreductase (cytochrome b-c1 complex, complex III, CIII). Cu cation is required as a cofactor.

The protein resides in the mitochondrion inner membrane. The enzyme catalyses 4 Fe(II)-[cytochrome c] + O2 + 8 H(+)(in) = 4 Fe(III)-[cytochrome c] + 2 H2O + 4 H(+)(out). In terms of biological role, component of the cytochrome c oxidase, the last enzyme in the mitochondrial electron transport chain which drives oxidative phosphorylation. The respiratory chain contains 3 multisubunit complexes succinate dehydrogenase (complex II, CII), ubiquinol-cytochrome c oxidoreductase (cytochrome b-c1 complex, complex III, CIII) and cytochrome c oxidase (complex IV, CIV), that cooperate to transfer electrons derived from NADH and succinate to molecular oxygen, creating an electrochemical gradient over the inner membrane that drives transmembrane transport and the ATP synthase. Cytochrome c oxidase is the component of the respiratory chain that catalyzes the reduction of oxygen to water. Electrons originating from reduced cytochrome c in the intermembrane space (IMS) are transferred via the dinuclear copper A center (CU(A)) of subunit 2 and heme A of subunit 1 to the active site in subunit 1, a binuclear center (BNC) formed by heme A3 and copper B (CU(B)). The BNC reduces molecular oxygen to 2 water molecules using 4 electrons from cytochrome c in the IMS and 4 protons from the mitochondrial matrix. This is Cytochrome c oxidase subunit 2 (COII) from Paracentrotus lividus (Common sea urchin).